A 124-amino-acid polypeptide reads, in one-letter code: Large ribosomal subunit protein bL12 (124 aa).

Belongs to the bacterial ribosomal protein bL12 family. In terms of assembly, homodimer. Part of the ribosomal stalk of the 50S ribosomal subunit. Forms a multimeric L10(L12)X complex, where L10 forms an elongated spine to which 2 to 4 L12 dimers bind in a sequential fashion. Binds GTP-bound translation factors.

Functionally, forms part of the ribosomal stalk which helps the ribosome interact with GTP-bound translation factors. Is thus essential for accurate translation. The polypeptide is Large ribosomal subunit protein bL12 (Jannaschia sp. (strain CCS1)).